The chain runs to 263 residues: Proteasome subunit alpha (263 aa).

Residues 229–263 (AALLQDTPPDDADADADAGKKPANDGNLPPNDDKS) form a disordered region.

It belongs to the peptidase T1A family. In terms of assembly, the 20S proteasome core is composed of 14 alpha and 14 beta subunits that assemble into four stacked heptameric rings, resulting in a barrel-shaped structure. The two inner rings, each composed of seven catalytic beta subunits, are sandwiched by two outer rings, each composed of seven alpha subunits. The catalytic chamber with the active sites is on the inside of the barrel. Has a gated structure, the ends of the cylinder being occluded by the N-termini of the alpha-subunits. Is capped by the proteasome-associated ATPase, ARC.

Its subcellular location is the cytoplasm. It participates in protein degradation; proteasomal Pup-dependent pathway. Its activity is regulated as follows. The formation of the proteasomal ATPase ARC-20S proteasome complex, likely via the docking of the C-termini of ARC into the intersubunit pockets in the alpha-rings, may trigger opening of the gate for substrate entry. Interconversion between the open-gate and close-gate conformations leads to a dynamic regulation of the 20S proteasome proteolysis activity. Functionally, component of the proteasome core, a large protease complex with broad specificity involved in protein degradation. This Actinosynnema mirum (strain ATCC 29888 / DSM 43827 / JCM 3225 / NBRC 14064 / NCIMB 13271 / NRRL B-12336 / IMRU 3971 / 101) protein is Proteasome subunit alpha.